We begin with the raw amino-acid sequence, 340 residues long: Glycerol-3-phosphate dehydrogenase [NAD(P)+] (340 aa).

Residues Ser15, Tyr16, His36, and Lys110 each contribute to the NADPH site. Sn-glycerol 3-phosphate contacts are provided by Lys110, Gly139, and Thr141. NADPH is bound at residue Ala143. Residues Lys195, Asp248, Ser258, Arg259, and Asn260 each contribute to the sn-glycerol 3-phosphate site. The Proton acceptor role is filled by Lys195. Arg259 provides a ligand contact to NADPH. NADPH contacts are provided by Val283 and Glu285.

This sequence belongs to the NAD-dependent glycerol-3-phosphate dehydrogenase family.

It localises to the cytoplasm. It catalyses the reaction sn-glycerol 3-phosphate + NAD(+) = dihydroxyacetone phosphate + NADH + H(+). The catalysed reaction is sn-glycerol 3-phosphate + NADP(+) = dihydroxyacetone phosphate + NADPH + H(+). It functions in the pathway membrane lipid metabolism; glycerophospholipid metabolism. Functionally, catalyzes the reduction of the glycolytic intermediate dihydroxyacetone phosphate (DHAP) to sn-glycerol 3-phosphate (G3P), the key precursor for phospholipid synthesis. This chain is Glycerol-3-phosphate dehydrogenase [NAD(P)+], found in Baumannia cicadellinicola subsp. Homalodisca coagulata.